The sequence spans 453 residues: Ethanolamine ammonia-lyase large subunit (453 aa).

Residues 160–162 and Asn-193 each bind substrate; that span reads RLQ. Pro-194 and Gln-246 together coordinate adenosylcob(III)alamin. Glu-287 provides a ligand contact to substrate. Ser-295 provides a ligand contact to adenosylcob(III)alamin. Residue Asp-362 participates in substrate binding. Position 401 (Met-401) interacts with adenosylcob(III)alamin.

It belongs to the EutB family. As to quaternary structure, the basic unit is a heterodimer which dimerizes to form tetramers. The heterotetramers trimerize; 6 large subunits form a core ring with 6 small subunits projecting outwards. It depends on adenosylcob(III)alamin as a cofactor.

The protein resides in the bacterial microcompartment. The enzyme catalyses ethanolamine = acetaldehyde + NH4(+). Its pathway is amine and polyamine degradation; ethanolamine degradation. In terms of biological role, catalyzes the deamination of various vicinal amino-alcohols to oxo compounds. It is spontaneously inactivated by its substrate and reactivated by EutA. May play a role in BMC assembly or maintenance. Its function is as follows. Expression of the eut operon allows this bacteria to use ethanolamine (EA) as a carbon, nitrogen and energy source. It relies on cobalamin (vitamin B12) both as a cofactor for the ethanolamine ammonia-lyase activity and to induce the operon. EA enhances bacterial survival in macrophages in a concentration-dependent manner, suggesting it is an important nutrient during infection. In Salmonella typhimurium (strain LT2 / SGSC1412 / ATCC 700720), this protein is Ethanolamine ammonia-lyase large subunit.